The following is a 360-amino-acid chain: Phospho-N-acetylmuramoyl-pentapeptide-transferase (360 aa).

Helical transmembrane passes span 26-46, 72-92, 94-114, 132-152, 168-188, 199-219, 236-256, 263-283, 288-308, and 338-358; these read AIVS…RMIA, PTMG…LWAY, SNPY…VGFV, WKYF…YMIG, VMPQ…VGTS, GLAI…AWAT, AGEL…FLWF, VFMG…IAVL, FLLV…ILQV, and VIVR…ATLK.

It belongs to the glycosyltransferase 4 family. MraY subfamily. Mg(2+) serves as cofactor.

It localises to the cell inner membrane. It catalyses the reaction UDP-N-acetyl-alpha-D-muramoyl-L-alanyl-gamma-D-glutamyl-meso-2,6-diaminopimeloyl-D-alanyl-D-alanine + di-trans,octa-cis-undecaprenyl phosphate = di-trans,octa-cis-undecaprenyl diphospho-N-acetyl-alpha-D-muramoyl-L-alanyl-D-glutamyl-meso-2,6-diaminopimeloyl-D-alanyl-D-alanine + UMP. It functions in the pathway cell wall biogenesis; peptidoglycan biosynthesis. Catalyzes the initial step of the lipid cycle reactions in the biosynthesis of the cell wall peptidoglycan: transfers peptidoglycan precursor phospho-MurNAc-pentapeptide from UDP-MurNAc-pentapeptide onto the lipid carrier undecaprenyl phosphate, yielding undecaprenyl-pyrophosphoryl-MurNAc-pentapeptide, known as lipid I. In Erwinia tasmaniensis (strain DSM 17950 / CFBP 7177 / CIP 109463 / NCPPB 4357 / Et1/99), this protein is Phospho-N-acetylmuramoyl-pentapeptide-transferase.